A 591-amino-acid chain; its full sequence is DEAD-box ATP-dependent RNA helicase 17 (591 aa).

The Q motif motif lies at 23–52 (CSFTDLGLHPTLCAHLQDKMGFQAPTRIQA). Residues 55 to 248 (IPVAMSGQHM…KISLKNPVMI (194 aa)) enclose the Helicase ATP-binding domain. 68-75 (AATGTGKT) is a binding site for ATP. The DEAD box signature appears at 181-184 (DEAD). Positions 293-482 (QLVQRYVKVS…SFPVNGQRLH (190 aa)) constitute a Helicase C-terminal domain. Residues 562–591 (GRSHQVQLKKRKKEQKRERPAKRRKIPAKR) are disordered. Positions 568-591 (QLKKRKKEQKRERPAKRRKIPAKR) are enriched in basic residues.

The protein belongs to the DEAD box helicase family. DDX31/DBP7 subfamily. As to expression, expressed in flowers and pollen grains.

Its subcellular location is the nucleus. It catalyses the reaction ATP + H2O = ADP + phosphate + H(+). In terms of biological role, may play a role in organellar ribosome biogenesis and suppress 16S rRNA maturation. This Oryza sativa subsp. japonica (Rice) protein is DEAD-box ATP-dependent RNA helicase 17.